We begin with the raw amino-acid sequence, 305 residues long: Orotidine 5'-phosphate decarboxylase (305 aa).

K108 functions as the Proton donor in the catalytic mechanism.

This sequence belongs to the OMP decarboxylase family. Type 2 subfamily.

The enzyme catalyses orotidine 5'-phosphate + H(+) = UMP + CO2. Its pathway is pyrimidine metabolism; UMP biosynthesis via de novo pathway; UMP from orotate: step 2/2. This is Orotidine 5'-phosphate decarboxylase from Caldicellulosiruptor bescii (strain ATCC BAA-1888 / DSM 6725 / KCTC 15123 / Z-1320) (Anaerocellum thermophilum).